The chain runs to 158 residues: SH3 domain-binding glutamic acid-rich protein homolog (158 aa).

A compositionally biased stretch (basic and acidic residues) spans 40–51 (TEPGKESEKELM). The segment at 40-74 (TEPGKESEKELMQNKSTSNGGTVSDPEPRHPLPPQ) is disordered. A compositionally biased stretch (polar residues) spans 52-61 (QNKSTSNGGT). Positions 67 to 73 (PRHPLPP) match the SH3-binding motif. The residue at position 109 (threonine 109) is a Phosphothreonine. Positions 118 to 158 (LKQENGDAKKEEAETEAEDKKTEAGDGDVDVKEEAAEKAEV) are disordered.

It belongs to the SH3BGR family.

The chain is SH3 domain-binding glutamic acid-rich protein homolog (Sh3beta) from Drosophila melanogaster (Fruit fly).